Here is a 297-residue protein sequence, read N- to C-terminus: Nitrogenase iron protein 2 (297 aa).

ATP is bound at residue 14 to 21 (GKGGIGKS). Residue Cys102 coordinates [4Fe-4S] cluster. An ADP-ribosylarginine; by dinitrogenase reductase ADP-ribosyltransferase modification is found at Arg105. Cys136 is a binding site for [4Fe-4S] cluster.

This sequence belongs to the NifH/BchL/ChlL family. As to quaternary structure, homodimer. [4Fe-4S] cluster is required as a cofactor. In terms of processing, the reversible ADP-ribosylation of Arg-105 inactivates the nitrogenase reductase and regulates nitrogenase activity.

The enzyme catalyses N2 + 8 reduced [2Fe-2S]-[ferredoxin] + 16 ATP + 16 H2O = H2 + 8 oxidized [2Fe-2S]-[ferredoxin] + 2 NH4(+) + 16 ADP + 16 phosphate + 6 H(+). The key enzymatic reactions in nitrogen fixation are catalyzed by the nitrogenase complex, which has 2 components: the iron protein and the molybdenum-iron protein. This chain is Nitrogenase iron protein 2 (nifH2), found in Nostoc sp. (strain PCC 7120 / SAG 25.82 / UTEX 2576).